We begin with the raw amino-acid sequence, 1184 residues long: Probable phospholipid-transporting ATPase 12 (1184 aa).

Topologically, residues Met-1–Leu-75 are cytoplasmic. The chain crosses the membrane as a helical span at residues Pro-76–Leu-97. Topologically, residues Ser-98–Pro-101 are extracellular. A helical transmembrane segment spans residues Leu-102 to Lys-124. Over Glu-125–Ile-306 the chain is Cytoplasmic. Residues Ile-307 to Trp-328 form a helical membrane-spanning segment. The Extracellular segment spans residues Thr-329–His-364. The chain crosses the membrane as a helical span at residues Phe-365 to Val-382. Over Ser-383–Ser-921 the chain is Cytoplasmic. Asp-430 (4-aspartylphosphate intermediate) is an active-site residue. Asp-866 and Asp-870 together coordinate Mg(2+). The helical transmembrane segment at Lys-922 to Tyr-941 threads the bilayer. The Extracellular portion of the chain corresponds to Glu-942–Asp-955. A helical transmembrane segment spans residues Trp-956–Ile-975. The Cytoplasmic portion of the chain corresponds to Phe-976–Arg-1005. Residues Ile-1006–Leu-1028 form a helical membrane-spanning segment. At Glu-1029–Gly-1041 the chain is on the extracellular side. The chain crosses the membrane as a helical span at residues Arg-1042–Thr-1064. Residues Ile-1065–Leu-1070 lie on the Cytoplasmic side of the membrane. A helical transmembrane segment spans residues Ile-1071–Gly-1091. Over Ser-1092–Ala-1108 the chain is Extracellular. Residues Leu-1109–Phe-1133 form a helical membrane-spanning segment. Over Ser-1134–Ser-1184 the chain is Cytoplasmic.

Belongs to the cation transport ATPase (P-type) (TC 3.A.3) family. Type IV subfamily.

Its subcellular location is the membrane. The enzyme catalyses ATP + H2O + phospholipidSide 1 = ADP + phosphate + phospholipidSide 2.. Its function is as follows. Involved in transport of phospholipids. In Arabidopsis thaliana (Mouse-ear cress), this protein is Probable phospholipid-transporting ATPase 12.